A 193-amino-acid polypeptide reads, in one-letter code: MTEIEKEEACSRLQQHYAQVLSLLGEDPKREGLLKTPLRVAKAMQFLTKGYNEDPEAILRAAMFEEDYQQMVIVKDIDFFSMCEHHMLPFFGKAHVGYIPNRYITGLSKLPRVVDVFARRLQVQERLTTQIKECIQNTLNPLGVIVVIEAQHMCMQMRGVEKQNSLTTTSDFTGAFEESTTREEFLNLIGRRR.

Positions 83, 86, and 154 each coordinate Zn(2+).

Belongs to the GTP cyclohydrolase I family. As to quaternary structure, homomer.

The catalysed reaction is GTP + H2O = 7,8-dihydroneopterin 3'-triphosphate + formate + H(+). The protein operates within cofactor biosynthesis; 7,8-dihydroneopterin triphosphate biosynthesis; 7,8-dihydroneopterin triphosphate from GTP: step 1/1. The polypeptide is GTP cyclohydrolase 1 (Porphyromonas gingivalis (strain ATCC 33277 / DSM 20709 / CIP 103683 / JCM 12257 / NCTC 11834 / 2561)).